A 134-amino-acid polypeptide reads, in one-letter code: ATP synthase epsilon chain, chloroplastic (134 aa).

The protein belongs to the ATPase epsilon chain family. F-type ATPases have 2 components, CF(1) - the catalytic core - and CF(0) - the membrane proton channel. CF(1) has five subunits: alpha(3), beta(3), gamma(1), delta(1), epsilon(1). CF(0) has three main subunits: a, b and c.

The protein localises to the plastid. Its subcellular location is the chloroplast thylakoid membrane. Its function is as follows. Produces ATP from ADP in the presence of a proton gradient across the membrane. This Drimys granadensis protein is ATP synthase epsilon chain, chloroplastic.